A 310-amino-acid chain; its full sequence is Beta-ketoacyl-[acyl-carrier-protein] synthase III 1 (310 aa).

Catalysis depends on residues C112 and H235. The segment at Q236–R240 is ACP-binding. The active site involves N265.

Belongs to the thiolase-like superfamily. FabH family. Homodimer.

It is found in the cytoplasm. It carries out the reaction malonyl-[ACP] + acetyl-CoA + H(+) = 3-oxobutanoyl-[ACP] + CO2 + CoA. Its pathway is lipid metabolism; fatty acid biosynthesis. Functionally, catalyzes the condensation reaction of fatty acid synthesis by the addition to an acyl acceptor of two carbons from malonyl-ACP. Catalyzes the first condensation reaction which initiates fatty acid synthesis and may therefore play a role in governing the total rate of fatty acid production. Possesses both acetoacetyl-ACP synthase and acetyl transacylase activities. Its substrate specificity determines the biosynthesis of branched-chain and/or straight-chain of fatty acids. This is Beta-ketoacyl-[acyl-carrier-protein] synthase III 1 from Bacillus anthracis.